The primary structure comprises 269 residues: Cytolethal distending toxin subunit B (269 aa).

Residues 1-18 (MKKYIISLIVFLSFYAQA) form the signal peptide. The Nuclear localization signal signature appears at 195–210 (REPADLEMNLTVPVRR).

Heterotrimer of 3 subunits, CdtA, CdtB and CdtC.

The protein localises to the secreted. Part of the tripartite complex that is required for the CDT activity. CdtB exhibits a DNA-nicking endonuclease activity, and very probably causes DNA damage in intoxicated cells. This damage induces G2/M cell cycle arrest, chromatin fragmentation, cell distention and nucleus enlargement. The chain is Cytolethal distending toxin subunit B (cdtB) from Escherichia coli.